Here is a 268-residue protein sequence, read N- to C-terminus: Small ribosomal subunit protein eS1 (268 aa).

The interval 1–21 (MAVGKNKGLSKGGKKGGKKKV) is disordered.

It belongs to the eukaryotic ribosomal protein eS1 family. Component of the small ribosomal subunit. Mature ribosomes consist of a small (40S) and a large (60S) subunit. The 40S subunit contains about 33 different proteins and 1 molecule of RNA (18S). The 60S subunit contains about 49 different proteins and 3 molecules of RNA (28S, 5.8S and 5S).

The protein localises to the cytoplasm. Its function is as follows. Essential for oogenesis; required for late follicle cell development. The polypeptide is Small ribosomal subunit protein eS1 (Drosophila sechellia (Fruit fly)).